A 296-amino-acid polypeptide reads, in one-letter code: MSETTYVKQCAYGKTLVRFMKKDICPKTKTHTVYEMDVQSLLTGELEESYTKADNSIVVPTDTQKNTIYVFAKNNDVSVPEVFAAKLAKHFVDKYKHIHGAALDITITPWTRMEVQGKPHSHSFIRNPGETRKTHVVFSEGKGFDVVSSLKDVLVLKSTGSGFTNFHKCEFTTLPEVTDRIFSTSIDCNYTFKHFDTFEELAGFDFNSIYEKVKEITLETFALDDSESVQATMYKMADTIINTYPAINEVYYALPNKHYFEINLAPFNIDNLGSNCSLYQPQAYPSGYITCTVARK.

Residues K14 and T61 each act as charge relay system in the active site. Urate is bound by residues T61, D62, F163, R180, V229, Q230, and N256. H258 (charge relay system) is an active-site residue.

The protein belongs to the uricase family.

It is found in the peroxisome. Its subcellular location is the cytoplasm. The protein localises to the nucleus. The catalysed reaction is urate + O2 + H2O = 5-hydroxyisourate + H2O2. It functions in the pathway purine metabolism; urate degradation; (S)-allantoin from urate: step 1/3. Its function is as follows. Catalyzes the oxidation of uric acid to 5-hydroxyisourate, which is further processed to form (S)-allantoin. The sequence is that of Uricase from Schizosaccharomyces pombe (strain 972 / ATCC 24843) (Fission yeast).